We begin with the raw amino-acid sequence, 462 residues long: uncharacterized protein (462 aa).

The tract at residues 405–462 (QPIGNNKSSPMKREFTAMEEDKTETGDIFKLLSQQKPAKGAKSKSKKYKKTEEDLSAV) is disordered. Over residues 415–431 (MKREFTAMEEDKTETGD) the composition is skewed to basic and acidic residues. Basic residues predominate over residues 443–453 (KGAKSKSKKYK).

This is an uncharacterized protein from Magallana gigas (Pacific oyster).